Consider the following 99-residue polypeptide: MYYRYMIVAILLLLLGVLGIVLNRGHLIIMLMSIELILLAASFLFLINSMITDTLIEQVFTIMVLTVAAAESSIGLAIMVAYYRIKGTIAIKSLNWLRG.

Helical transmembrane passes span 2–22 (YYRYMIVAILLLLLGVLGIVL), 27–47 (LIIMLMSIELILLAASFLFLI), and 59–79 (VFTIMVLTVAAAESSIGLAIM).

This sequence belongs to the complex I subunit 4L family.

Its subcellular location is the mitochondrion membrane. The catalysed reaction is a ubiquinone + NADH + 5 H(+)(in) = a ubiquinol + NAD(+) + 4 H(+)(out). Functionally, core subunit of the mitochondrial membrane respiratory chain NADH dehydrogenase (Complex I) that is believed to belong to the minimal assembly required for catalysis. Complex I functions in the transfer of electrons from NADH to the respiratory chain. The immediate electron acceptor for the enzyme is believed to be ubiquinone. The protein is NADH-ubiquinone oxidoreductase chain 4L (ND4L) of Metridium senile (Brown sea anemone).